The primary structure comprises 455 residues: Ribulose bisphosphate carboxylase large chain (455 aa).

An N6,N6,N6-trimethyllysine modification is found at Lys5. Positions 114 and 164 each coordinate substrate. Lys166 functions as the Proton acceptor in the catalytic mechanism. Lys168 lines the substrate pocket. Mg(2+) contacts are provided by Lys192, Asp194, and Glu195. Lys192 carries the N6-carboxylysine modification. His285 (proton acceptor) is an active-site residue. Positions 286, 318, and 370 each coordinate substrate.

Belongs to the RuBisCO large chain family. Type I subfamily. In terms of assembly, heterohexadecamer of 8 large chains and 8 small chains; disulfide-linked. The disulfide link is formed within the large subunit homodimers. The cofactor is Mg(2+). In terms of processing, the disulfide bond which can form in the large chain dimeric partners within the hexadecamer appears to be associated with oxidative stress and protein turnover.

It localises to the plastid. The protein localises to the chloroplast. It catalyses the reaction 2 (2R)-3-phosphoglycerate + 2 H(+) = D-ribulose 1,5-bisphosphate + CO2 + H2O. The enzyme catalyses D-ribulose 1,5-bisphosphate + O2 = 2-phosphoglycolate + (2R)-3-phosphoglycerate + 2 H(+). Functionally, ruBisCO catalyzes two reactions: the carboxylation of D-ribulose 1,5-bisphosphate, the primary event in carbon dioxide fixation, as well as the oxidative fragmentation of the pentose substrate in the photorespiration process. Both reactions occur simultaneously and in competition at the same active site. The chain is Ribulose bisphosphate carboxylase large chain from Lupinus luteus (European yellow lupine).